The following is a 282-amino-acid chain: Bifunctional protein FolD (282 aa).

Residues 164–166 (GRS) and Ser-189 contribute to the NADP(+) site.

The protein belongs to the tetrahydrofolate dehydrogenase/cyclohydrolase family. Homodimer.

The enzyme catalyses (6R)-5,10-methylene-5,6,7,8-tetrahydrofolate + NADP(+) = (6R)-5,10-methenyltetrahydrofolate + NADPH. It carries out the reaction (6R)-5,10-methenyltetrahydrofolate + H2O = (6R)-10-formyltetrahydrofolate + H(+). Its pathway is one-carbon metabolism; tetrahydrofolate interconversion. In terms of biological role, catalyzes the oxidation of 5,10-methylenetetrahydrofolate to 5,10-methenyltetrahydrofolate and then the hydrolysis of 5,10-methenyltetrahydrofolate to 10-formyltetrahydrofolate. This chain is Bifunctional protein FolD, found in Lactobacillus helveticus (strain DPC 4571).